The primary structure comprises 21 residues: Azemiopsin (21 aa).

Pro residues predominate over residues 1–14 (DNWWPKPPHQGPRP). Residues 1-21 (DNWWPKPPHQGPRPPRPRPKP) are disordered. 3 implicated in receptor binding regions span residues 3 to 6 (WWPK), 8 to 11 (PHQG), and 13 to 14 (RP).

As to quaternary structure, monomer. In terms of tissue distribution, expressed by the venom gland.

It localises to the secreted. In terms of biological role, in vitro, reversibly blocks human muscle-type nicotinic acetylcholine receptors (nAChR) alpha-1-beta-1-epsilon-delta/CHRNA1-CHRNB1-CHRNE-CHRND (EC(50)=0.44 uM) and alpha-1-beta-1-gamma-delta/CHRNA1-CHRNB1-CHRNG-CHRND (EC(50)=1.56 uM). Binds to nAChR from T.californica (IC(50)=0.03-0.18 uM), human neuronal nAChR alpha-7/CHRNA7 (IC(50)=22 uM) and acetylcholine-binding proteins (AChBP) from L.stagnalis (IC(50)=63 uM) and A.californica (IC(50)=230 uM). This chain is Azemiopsin, found in Azemiops feae (Fea's viper).